We begin with the raw amino-acid sequence, 516 residues long: GMP synthase [glutamine-hydrolyzing] (516 aa).

In terms of domain architecture, Glutamine amidotransferase type-1 spans 8 to 198; sequence KILILDFGSQ…VVNICGCDTL (191 aa). Catalysis depends on C84, which acts as the Nucleophile. Active-site residues include H172 and E174. The 193-residue stretch at 199-391 folds into the GMPS ATP-PPase domain; sequence WNIENIIEND…LGLPYNMLYR (193 aa). Residue 226 to 232 coordinates ATP; sequence SGGVDSS.

As to quaternary structure, homodimer.

It carries out the reaction XMP + L-glutamine + ATP + H2O = GMP + L-glutamate + AMP + diphosphate + 2 H(+). It participates in purine metabolism; GMP biosynthesis; GMP from XMP (L-Gln route): step 1/1. Functionally, catalyzes the synthesis of GMP from XMP. In Francisella tularensis subsp. tularensis (strain FSC 198), this protein is GMP synthase [glutamine-hydrolyzing].